Here is a 205-residue protein sequence, read N- to C-terminus: MNDYKHPLRVGVGGPVGSGKTALLEALCKAMRDTYQLAVVTNDIYTKEDQRILTEAGALAPERIVGVETGGCPHTAIREDASMNLAAVEALSETFGNLDLIFVESGGDNLSATFSPELADLTIYVIDVAEGEKIPRKGGPGITKSDFLVINKTDLAPYVGASLEVMARDTMRMRGDRPWAFTNLKTGDGLATIIAFLEDKGMLRV.

14–21 lines the GTP pocket; the sequence is GPVGSGKT.

The protein belongs to the SIMIBI class G3E GTPase family. UreG subfamily. In terms of assembly, homodimer. UreD, UreF and UreG form a complex that acts as a GTP-hydrolysis-dependent molecular chaperone, activating the urease apoprotein by helping to assemble the nickel containing metallocenter of UreC. The UreE protein probably delivers the nickel.

The protein localises to the cytoplasm. Facilitates the functional incorporation of the urease nickel metallocenter. This process requires GTP hydrolysis, probably effectuated by UreG. The sequence is that of Urease accessory protein UreG from Citrobacter koseri (strain ATCC BAA-895 / CDC 4225-83 / SGSC4696).